The primary structure comprises 71 residues: Small ribosomal subunit protein bS21 (71 aa).

This sequence belongs to the bacterial ribosomal protein bS21 family.

This chain is Small ribosomal subunit protein bS21, found in Nitrosococcus oceani (strain ATCC 19707 / BCRC 17464 / JCM 30415 / NCIMB 11848 / C-107).